The following is a 298-amino-acid chain: Pyruvate synthase subunit PorB (298 aa).

Residues cysteine 19, cysteine 22, cysteine 47, and cysteine 218 each coordinate [4Fe-4S] cluster.

As to quaternary structure, heterotetramer of one alpha, one beta, one delta and one gamma chain. The cofactor is [4Fe-4S] cluster.

It catalyses the reaction 2 oxidized [2Fe-2S]-[ferredoxin] + pyruvate + CoA = 2 reduced [2Fe-2S]-[ferredoxin] + acetyl-CoA + CO2 + H(+). The polypeptide is Pyruvate synthase subunit PorB (porB) (Methanocaldococcus jannaschii (strain ATCC 43067 / DSM 2661 / JAL-1 / JCM 10045 / NBRC 100440) (Methanococcus jannaschii)).